The following is an 899-amino-acid chain: Protein translocase subunit SecA (899 aa).

ATP contacts are provided by residues glutamine 87, 105 to 109 (GEGKT), and aspartate 516. The Zn(2+) site is built by cysteine 884, cysteine 886, cysteine 895, and histidine 896.

It belongs to the SecA family. As to quaternary structure, monomer and homodimer. Part of the essential Sec protein translocation apparatus which comprises SecA, SecYEG and auxiliary proteins SecDF. Other proteins may also be involved. The cofactor is Zn(2+).

It is found in the cell inner membrane. Its subcellular location is the cytoplasm. The catalysed reaction is ATP + H2O + cellular proteinSide 1 = ADP + phosphate + cellular proteinSide 2.. In terms of biological role, part of the Sec protein translocase complex. Interacts with the SecYEG preprotein conducting channel. Has a central role in coupling the hydrolysis of ATP to the transfer of proteins into and across the cell membrane, serving as an ATP-driven molecular motor driving the stepwise translocation of polypeptide chains across the membrane. In Borreliella burgdorferi (strain ATCC 35210 / DSM 4680 / CIP 102532 / B31) (Borrelia burgdorferi), this protein is Protein translocase subunit SecA.